We begin with the raw amino-acid sequence, 215 residues long: N-(5'-phosphoribosyl)anthranilate isomerase (215 aa).

It belongs to the TrpF family.

The catalysed reaction is N-(5-phospho-beta-D-ribosyl)anthranilate = 1-(2-carboxyphenylamino)-1-deoxy-D-ribulose 5-phosphate. The protein operates within amino-acid biosynthesis; L-tryptophan biosynthesis; L-tryptophan from chorismate: step 3/5. The chain is N-(5'-phosphoribosyl)anthranilate isomerase from Paramagnetospirillum magneticum (strain ATCC 700264 / AMB-1) (Magnetospirillum magneticum).